A 292-amino-acid polypeptide reads, in one-letter code: 11-beta-hydroxysteroid dehydrogenase 1 (292 aa).

The Cytoplasmic portion of the chain corresponds to 2–7 (AFMKKY). The helical; Signal-anchor for type II membrane protein transmembrane segment at 8 to 24 (LLPLLGLFLAYYYYSAN) threads the bilayer. Topologically, residues 25-292 (EEFRPEMLQG…KFDISKLVNN (268 aa)) are lumenal. NADP(+)-binding positions include 41-67 (GASK…TARS), 92-93 (TM), and 119-121 (NHI). Asn-123 and Asn-162 each carry an N-linked (GlcNAc...) asparagine glycan. Ser-170 is a substrate binding site. The active-site Proton acceptor is the Tyr-183. Residue 183-187 (YSASK) coordinates NADP(+). N-linked (GlcNAc...) asparagine glycosylation is present at Asn-207. 218–222 (IDTDT) serves as a coordination point for NADP(+).

The protein belongs to the short-chain dehydrogenases/reductases (SDR) family. Homodimer. In terms of processing, glycosylated. As to expression, expressed in the eye.

The protein resides in the endoplasmic reticulum membrane. It is found in the microsome membrane. The enzyme catalyses an 11beta-hydroxysteroid + NADP(+) = an 11-oxosteroid + NADPH + H(+). It carries out the reaction corticosterone + NADP(+) = 11-dehydrocorticosterone + NADPH + H(+). It catalyses the reaction cortisone + NADPH + H(+) = cortisol + NADP(+). The catalysed reaction is a 7beta-hydroxysteroid + NADP(+) = a 7-oxosteroid + NADPH + H(+). The enzyme catalyses 7-oxocholesterol + NADPH + H(+) = 7beta-hydroxycholesterol + NADP(+). It carries out the reaction chenodeoxycholate + NADP(+) = 7-oxolithocholate + NADPH + H(+). It catalyses the reaction 7-oxolithocholate + NADPH + H(+) = ursodeoxycholate + NADP(+). The catalysed reaction is glycochenodeoxycholate + NADP(+) = 7-oxoglycolithocholate + NADPH + H(+). The enzyme catalyses taurochenodeoxycholate + NADP(+) = 7-oxotaurolithocholate + NADPH + H(+). It carries out the reaction tauroursodeoxycholate + NADP(+) = 7-oxotaurolithocholate + NADPH + H(+). It catalyses the reaction glycoursodeoxycholate + NADP(+) = 7-oxoglycolithocholate + NADPH + H(+). The catalysed reaction is 7-oxopregnenolone + NADPH + H(+) = 7beta-hydroxypregnenolone + NADP(+). The enzyme catalyses 3beta,7alpha-dihydroxyandrost-5-en-17-one + NADP(+) = 3beta-hydroxy-5-androstene-7,17-dione + NADPH + H(+). It carries out the reaction 3beta-hydroxy-5-androstene-7,17-dione + NADPH + H(+) = 3beta,7beta-dihydroxyandrost-5-en-17-one + NADP(+). It catalyses the reaction 3beta-hydroxy-5alpha-androstane-7,17-dione + NADPH + H(+) = 3beta,7beta-dihydroxy-5alpha-androstan-17-one + NADP(+). It functions in the pathway steroid metabolism. Controls the reversible conversion of biologically active glucocorticoids such as cortisone to cortisol, and 11-dehydrocorticosterone to corticosterone in the presence of NADP(H). Participates in the corticosteroid receptor-mediated anti-inflammatory response, as well as metabolic and homeostatic processes. Plays a role in the secretion of aqueous humor in the eye, maintaining a normotensive, intraocular environment. Bidirectional in vitro, predominantly functions as a reductase in vivo, thereby increasing the concentration of active glucocorticoids. It has broad substrate specificity, besides glucocorticoids, it accepts other steroid and sterol substrates. It has broad substrate specificity, besides glucocorticoids, it accepts other steroid and sterol substrates. Interconverts 7-oxo- and 7-hydroxy-neurosteroids such as 7-oxopregnenolone and 7beta-hydroxypregnenolone, 7-oxodehydroepiandrosterone (3beta-hydroxy-5-androstene-7,17-dione) and 7beta-hydroxydehydroepiandrosterone (3beta,7beta-dihydroxyandrost-5-en-17-one), among others. Catalyzes the stereo-specific conversion of the major dietary oxysterol, 7-ketocholesterol (7-oxocholesterol), into the more polar 7-beta-hydroxycholesterol metabolite. 7-oxocholesterol is one of the most important oxysterols, it participates in several events such as induction of apoptosis, accumulation in atherosclerotic lesions, lipid peroxidation, and induction of foam cell formation. Mediates the 7-oxo reduction of 7-oxolithocholate mainly to chenodeoxycholate, and to a lesser extent to ursodeoxycholate, both in its free form and when conjugated to glycine or taurine, providing a link between glucocorticoid activation and bile acid metabolism. Catalyzes the synthesis of 7-beta-25-dihydroxycholesterol from 7-oxo-25-hydroxycholesterol in vitro, which acts as a ligand for the G-protein-coupled receptor (GPCR) Epstein-Barr virus-induced gene 2 (EBI2) and may thereby regulate immune cell migration. This is 11-beta-hydroxysteroid dehydrogenase 1 from Oryctolagus cuniculus (Rabbit).